A 179-amino-acid chain; its full sequence is Probable galaptin lec-7 (179 aa).

The Galectin domain maps to 11–138; it reads SVYQIEENLK…SVDIESIVFK (128 aa).

The chain is Probable galaptin lec-7 (lec-7) from Caenorhabditis elegans.